The primary structure comprises 407 residues: Myeloid cell nuclear differentiation antigen (407 aa).

A Pyrin domain is found at 1–88 (MANEYKKILL…VNNLRKERSK (88 aa)). The segment at 122–211 (LTSEVGERIP…TRRNVPQKDP (90 aa)) is disordered. Positions 131–137 (PVAQKRK) match the Nuclear localization signal motif. Positions 177 to 199 (HTSSSTPSNTSFAQNQQTQAQCQ) are enriched in low complexity. The region spanning 196–394 (AQCQVDTRRN…CGSHSFIKVI (199 aa)) is the HIN-200 domain.

In terms of assembly, participates in a ternary complex with YY1 and the YY1 target DNA element. Binds nucleolin and nucleophosmin/NPM/B23.

The protein resides in the nucleus. Its subcellular location is the cytoplasm. May act as a transcriptional activator/repressor in the myeloid lineage. Plays a role in the granulocyte/monocyte cell-specific response to interferon. Stimulates the DNA binding of the transcriptional repressor protein YY1. The chain is Myeloid cell nuclear differentiation antigen (MNDA) from Macaca fascicularis (Crab-eating macaque).